The following is a 468-amino-acid chain: MSSSLWLQCLQQLQEELPATEFSMWVRPLQAELNDNTLTLFAPNRFVLDWVRDKYLNSITRLLQEYCGNDIPNLRFEVGSRPVSAPKPAPTRTPADVAAESSAPAQLQARKPVHKTWDDDPQAIAAINHRSNMNPKHKFDNFVEGKSNQLGLAAARQVSDNPGAAYNPLFLYGGTGLGKTHLLHAVGNAIVDNNPNAKVVYMHSERFVQDMVKALQNNAIEEFKRYYRSVDALLIDDIQFFANKERSQEEFFHTFNALLEGNQQIILTSDRYPKEISGVEDRLKSRFGWGLTVAIEPPELETRVAILMKKAEDHQIHLADEVAFFIAKRLRSNVRELEGALNRVIANANFTGRPITIDFVREALRDLLALQEKLVTIDNIQKTVAEYYKIKVADLLSKRRSRSVARPRQLAMALAKELTNHSLPEIGDAFGGRDHTTVLHACRKIEQLREESHDIKEDYSNLIRTLSS.

A domain I, interacts with DnaA modulators region spans residues 1–84; sequence MSSSLWLQCL…RFEVGSRPVS (84 aa). The disordered stretch occupies residues 80-106; that stretch reads SRPVSAPKPAPTRTPADVAAESSAPAQ. The tract at residues 84–131 is domain II; that stretch reads SAPKPAPTRTPADVAAESSAPAQLQARKPVHKTWDDDPQAIAAINHRS. The segment at 132 to 348 is domain III, AAA+ region; that stretch reads NMNPKHKFDN…GALNRVIANA (217 aa). The ATP site is built by glycine 176, glycine 178, lysine 179, and threonine 180. Residues 349–468 form a domain IV, binds dsDNA region; sequence NFTGRPITID…YSNLIRTLSS (120 aa).

It belongs to the DnaA family. Oligomerizes as a right-handed, spiral filament on DNA at oriC.

The protein resides in the cytoplasm. Functionally, plays an essential role in the initiation and regulation of chromosomal replication. ATP-DnaA binds to the origin of replication (oriC) to initiate formation of the DNA replication initiation complex once per cell cycle. Binds the DnaA box (a 9 base pair repeat at the origin) and separates the double-stranded (ds)DNA. Forms a right-handed helical filament on oriC DNA; dsDNA binds to the exterior of the filament while single-stranded (ss)DNA is stabiized in the filament's interior. The ATP-DnaA-oriC complex binds and stabilizes one strand of the AT-rich DNA unwinding element (DUE), permitting loading of DNA polymerase. After initiation quickly degrades to an ADP-DnaA complex that is not apt for DNA replication. Binds acidic phospholipids. This is Chromosomal replication initiator protein DnaA from Vibrio parahaemolyticus serotype O3:K6 (strain RIMD 2210633).